A 417-amino-acid chain; its full sequence is Voltage-gated ClC-type chloride channel ClcB (417 aa).

11 consecutive transmembrane segments (helical) span residues 5–25 (LLIATIIGILAALAVAGFRHA), 54–74 (LITPAVGGLAAGALLWGWQKM), 146–166 (LWIACGAAAGMASAYHAPLAG), 168–188 (LFIAEILFGTLMLASLGPVVI), 190–210 (AVVALLTTHLLSGGNALLYTV), 222–242 (AMIISTGLVAGVCGPLFMWLM), 258–278 (WQLALGGFIVGLLSLLTPAVW), 288–308 (FLLSPPLLSVIAGIFICKLLA), 316–336 (GAPGGVFTPTLFIGLSIGMLY), 339–359 (MWGFWLPGADEMAILLGLTGM), and 380–400 (MTGEYRLLPGLLIACVVASVL).

This sequence belongs to the chloride channel (TC 2.A.49) family. ClcB subfamily.

Its subcellular location is the cell inner membrane. Functionally, probably acts as an electrical shunt for an outwardly-directed proton pump that is linked to amino acid decarboxylation, as part of the extreme acid resistance (XAR) response. This Citrobacter koseri (strain ATCC BAA-895 / CDC 4225-83 / SGSC4696) protein is Voltage-gated ClC-type chloride channel ClcB.